The primary structure comprises 184 residues: Ras-related protein Rap-1A (184 aa).

GTP contacts are provided by residues Gly10–Ala18, Val29–Thr35, Gly60, and Asn116–Asp119. An Effector region motif is present at residues Tyr32–Tyr40. Cysteine methyl ester is present on Cys181. Cys181 carries the S-geranylgeranyl cysteine lipid modification. The propeptide at Leu182–Leu184 is removed in mature form.

Belongs to the small GTPase superfamily. Ras family. Found in a complex, at least composed of ITGB1BP1, KRIT1 and RAP1A. Interacts (active GTP-bound form preferentially) with KRIT1 (via C-terminus FERM domain); the interaction does not induce the opening conformation of KRIT1. Found in a complex composed of CDH1, RAP1A and PKP3; PKP3 acts as a scaffold protein within the complex, the complex is required for CDH1 localization to mature desmosome cell junctions. In its GTP-bound form interacts with PLCE1 and RADIL. Interacts with SGSM1, SGSM2 and SGSM3. Interacts (via GTP-bound active form) with RAPGEF2 (via Ras-associating domain). Interacts with TBC1D21. Interacts with RAP1GDS1.

Its subcellular location is the cell membrane. It localises to the cytoplasm. The protein resides in the perinuclear region. The protein localises to the cell junction. It is found in the early endosome. It catalyses the reaction GTP + H2O = GDP + phosphate + H(+). Its activity is regulated as follows. Activated by guanine nucleotide-exchange factors (GEF) EPAC and EPAC2 in a cAMP-dependent manner, and GFR. In terms of biological role, counteracts the mitogenic function of Ras, at least partly because it can interact with Ras GAPs and RAF in a competitive manner. Together with ITGB1BP1, regulates KRIT1 localization to microtubules and membranes. Plays a role in nerve growth factor (NGF)-induced neurite outgrowth. Plays a role in the regulation of embryonic blood vessel formation. Involved in the establishment of basal endothelial barrier function. Facilitates the progressive accumulation of CDH1 at mature desmosome junctions via cAMP-dependent signaling and its interaction with PKP3. May be involved in the regulation of the vascular endothelial growth factor receptor KDR expression at endothelial cell-cell junctions. This Bos taurus (Bovine) protein is Ras-related protein Rap-1A (RAP1A).